The sequence spans 285 residues: Bifunctional protein FolD (285 aa).

NADP(+)-binding positions include 166 to 168 (GAS) and Ile-232.

This sequence belongs to the tetrahydrofolate dehydrogenase/cyclohydrolase family. Homodimer.

It carries out the reaction (6R)-5,10-methylene-5,6,7,8-tetrahydrofolate + NADP(+) = (6R)-5,10-methenyltetrahydrofolate + NADPH. The enzyme catalyses (6R)-5,10-methenyltetrahydrofolate + H2O = (6R)-10-formyltetrahydrofolate + H(+). It participates in one-carbon metabolism; tetrahydrofolate interconversion. Catalyzes the oxidation of 5,10-methylenetetrahydrofolate to 5,10-methenyltetrahydrofolate and then the hydrolysis of 5,10-methenyltetrahydrofolate to 10-formyltetrahydrofolate. The chain is Bifunctional protein FolD from Aliivibrio salmonicida (strain LFI1238) (Vibrio salmonicida (strain LFI1238)).